The primary structure comprises 319 residues: Phosphate transport system permease protein PstC (319 aa).

The Cytoplasmic segment spans residues Met-1 to Lys-24. Residues Leu-25–Ser-44 form a helical membrane-spanning segment. At Ser-45 to Pro-74 the chain is on the periplasmic side. A helical membrane pass occupies residues Ile-75–Phe-94. Residues Ile-75 to Ser-305 enclose the ABC transmembrane type-1 domain. Residues Gly-95 to Glu-117 are Cytoplasmic-facing. A helical transmembrane segment spans residues Leu-118–Pro-137. At Leu-138–Gly-167 the chain is on the periplasmic side. A helical transmembrane segment spans residues Ile-168–Ala-187. At Val-188–Met-232 the chain is on the cytoplasmic side. The helical transmembrane segment at Leu-233–Thr-252 threads the bilayer. The Periplasmic segment spans residues Tyr-253–His-283. Residues Val-284–Ala-303 form a helical membrane-spanning segment. Topologically, residues Ala-304–Arg-319 are cytoplasmic.

The protein belongs to the binding-protein-dependent transport system permease family. CysTW subfamily.

The protein localises to the cell inner membrane. Its function is as follows. Part of the binding-protein-dependent transport system for phosphate; probably responsible for the translocation of the substrate across the membrane. This is Phosphate transport system permease protein PstC (pstC) from Escherichia coli O157:H7.